A 273-amino-acid chain; its full sequence is Ribosomal RNA small subunit methyltransferase A (273 aa).

Positions 18, 20, 45, 66, 91, and 113 each coordinate S-adenosyl-L-methionine.

This sequence belongs to the class I-like SAM-binding methyltransferase superfamily. rRNA adenine N(6)-methyltransferase family. RsmA subfamily.

It is found in the cytoplasm. The catalysed reaction is adenosine(1518)/adenosine(1519) in 16S rRNA + 4 S-adenosyl-L-methionine = N(6)-dimethyladenosine(1518)/N(6)-dimethyladenosine(1519) in 16S rRNA + 4 S-adenosyl-L-homocysteine + 4 H(+). Functionally, specifically dimethylates two adjacent adenosines (A1518 and A1519) in the loop of a conserved hairpin near the 3'-end of 16S rRNA in the 30S particle. May play a critical role in biogenesis of 30S subunits. The protein is Ribosomal RNA small subunit methyltransferase A of Escherichia coli O17:K52:H18 (strain UMN026 / ExPEC).